The following is a 197-amino-acid chain: Phosphoheptose isomerase (197 aa).

The SIS domain occupies 36-197 (MVNALLNEGK…IDRQLFGSEE (162 aa)). A substrate-binding site is contributed by 51–53 (NGG). Residues His-60 and Glu-64 each coordinate Zn(2+). Substrate contacts are provided by residues Glu-64, 93 to 94 (ND), 119 to 121 (STS), Ser-124, and Gln-174. Zn(2+) contacts are provided by Gln-174 and His-182.

Belongs to the SIS family. GmhA subfamily. Homotetramer. Zn(2+) is required as a cofactor.

It is found in the cytoplasm. The catalysed reaction is 2 D-sedoheptulose 7-phosphate = D-glycero-alpha-D-manno-heptose 7-phosphate + D-glycero-beta-D-manno-heptose 7-phosphate. It functions in the pathway carbohydrate biosynthesis; D-glycero-D-manno-heptose 7-phosphate biosynthesis; D-glycero-alpha-D-manno-heptose 7-phosphate and D-glycero-beta-D-manno-heptose 7-phosphate from sedoheptulose 7-phosphate: step 1/1. Catalyzes the isomerization of sedoheptulose 7-phosphate in D-glycero-D-manno-heptose 7-phosphate. The chain is Phosphoheptose isomerase from Pseudomonas aeruginosa (strain LESB58).